The primary structure comprises 1722 residues: Signal-induced proliferation-associated 1-like protein 2 (1722 aa).

Disordered stretches follow at residues methionine 1 to glutamine 29 and methionine 45 to proline 73. Residues glutamate 57–alanine 66 are compositionally biased toward gly residues. A phosphoserine mark is found at serine 149, serine 380, and serine 384. Residues alanine 362–asparagine 404 form a disordered region. A compositionally biased stretch (basic and acidic residues) spans serine 384–serine 403. The Rap-GAP domain maps to leucine 596–leucine 813. Positions glutamate 951–glutamate 1027 constitute a PDZ domain. Serine 1030 carries the post-translational modification Phosphoserine. 3 disordered regions span residues histidine 1068–aspartate 1172, glutamate 1197–glycine 1246, and alanine 1328–glycine 1361. 2 stretches are compositionally biased toward low complexity: residues leucine 1091–alanine 1103 and serine 1120–proline 1131. Basic and acidic residues predominate over residues glutamate 1197 to aspartate 1218. Positions serine 1220–asparagine 1237 are enriched in low complexity. Serine 1245 is modified (phosphoserine). Over residues alanine 1328–histidine 1355 the composition is skewed to low complexity. Residues serine 1461, serine 1472, serine 1478, serine 1488, serine 1549, serine 1552, and serine 1591 each carry the phosphoserine modification. The stretch at serine 1652–glutamate 1712 forms a coiled coil.

In Rattus norvegicus (Rat), this protein is Signal-induced proliferation-associated 1-like protein 2 (Sipa1l2).